Here is a 623-residue protein sequence, read N- to C-terminus: tRNA uridine 5-carboxymethylaminomethyl modification enzyme MnmG (623 aa).

12–17 (GAGHAG) contacts FAD. Residue 272-286 (GPRYCPSIEDKINRF) participates in NAD(+) binding.

It belongs to the MnmG family. As to quaternary structure, homodimer. Heterotetramer of two MnmE and two MnmG subunits. The cofactor is FAD.

The protein localises to the cytoplasm. NAD-binding protein involved in the addition of a carboxymethylaminomethyl (cmnm) group at the wobble position (U34) of certain tRNAs, forming tRNA-cmnm(5)s(2)U34. This Flavobacterium johnsoniae (strain ATCC 17061 / DSM 2064 / JCM 8514 / BCRC 14874 / CCUG 350202 / NBRC 14942 / NCIMB 11054 / UW101) (Cytophaga johnsonae) protein is tRNA uridine 5-carboxymethylaminomethyl modification enzyme MnmG.